An 82-amino-acid chain; its full sequence is MDYPLNEQSFEQITPYDERQPYYYPRPRPPFYPPYYYPRPYYPFYPFYPRPPYYYPRPRPPYYPWYGYGGGYGGGYGGGYGY.

Residues 1–19 (MDYPLNEQSFEQITPYDER) constitute a propeptide that is removed on maturation.

The protein resides in the spore coat. Inner spore coat protein which seems to play a role in germination. The polypeptide is Spore coat protein T (cotT) (Bacillus subtilis (strain 168)).